The primary structure comprises 115 residues: Large ribosomal subunit protein bL20 (115 aa).

This sequence belongs to the bacterial ribosomal protein bL20 family.

Binds directly to 23S ribosomal RNA and is necessary for the in vitro assembly process of the 50S ribosomal subunit. It is not involved in the protein synthesizing functions of that subunit. The protein is Large ribosomal subunit protein bL20 of Synechococcus sp. (strain WH7803).